A 172-amino-acid chain; its full sequence is Peptide deformylase (172 aa).

Residues C92 and H134 each coordinate Fe cation. E135 is a catalytic residue. H138 is a binding site for Fe cation.

This sequence belongs to the polypeptide deformylase family. It depends on Fe(2+) as a cofactor.

It catalyses the reaction N-terminal N-formyl-L-methionyl-[peptide] + H2O = N-terminal L-methionyl-[peptide] + formate. Functionally, removes the formyl group from the N-terminal Met of newly synthesized proteins. Requires at least a dipeptide for an efficient rate of reaction. N-terminal L-methionine is a prerequisite for activity but the enzyme has broad specificity at other positions. This chain is Peptide deformylase, found in Saccharophagus degradans (strain 2-40 / ATCC 43961 / DSM 17024).